We begin with the raw amino-acid sequence, 33 residues long: Photosystem II reaction center protein Psb30 (33 aa).

The helical transmembrane segment at 5-25 (VILQLGSILLVVAAGPLVIVL) threads the bilayer.

The protein belongs to the Psb30/Ycf12 family. PSII is composed of 1 copy each of membrane proteins PsbA, PsbB, PsbC, PsbD, PsbE, PsbF, PsbH, PsbI, PsbJ, PsbK, PsbL, PsbM, PsbT, PsbX, PsbY, PsbZ, Psb30/Ycf12, peripheral proteins of the oxygen-evolving complex and a large number of cofactors. It forms dimeric complexes.

Its subcellular location is the plastid. It localises to the chloroplast thylakoid membrane. Its function is as follows. A core subunit of photosystem II (PSII), probably helps stabilize the reaction center. The chain is Photosystem II reaction center protein Psb30 from Oltmannsiellopsis viridis (Marine flagellate).